A 74-amino-acid polypeptide reads, in one-letter code: Exodeoxyribonuclease 7 small subunit (74 aa).

Belongs to the XseB family. Heterooligomer composed of large and small subunits.

The protein localises to the cytoplasm. It carries out the reaction Exonucleolytic cleavage in either 5'- to 3'- or 3'- to 5'-direction to yield nucleoside 5'-phosphates.. Bidirectionally degrades single-stranded DNA into large acid-insoluble oligonucleotides, which are then degraded further into small acid-soluble oligonucleotides. The polypeptide is Exodeoxyribonuclease 7 small subunit (Neisseria meningitidis serogroup C / serotype 2a (strain ATCC 700532 / DSM 15464 / FAM18)).